The chain runs to 274 residues: SPbeta prophage-derived UPF0714 protein YoqZ (274 aa).

The protein belongs to the UPF0714 family.

The sequence is that of SPbeta prophage-derived UPF0714 protein YoqZ (yoqZ) from Bacillus subtilis (strain 168).